The primary structure comprises 876 residues: Alanine--tRNA ligase (876 aa).

4 residues coordinate Zn(2+): His-560, His-564, Cys-662, and His-666.

The protein belongs to the class-II aminoacyl-tRNA synthetase family. The cofactor is Zn(2+).

Its subcellular location is the cytoplasm. The enzyme catalyses tRNA(Ala) + L-alanine + ATP = L-alanyl-tRNA(Ala) + AMP + diphosphate. Catalyzes the attachment of alanine to tRNA(Ala) in a two-step reaction: alanine is first activated by ATP to form Ala-AMP and then transferred to the acceptor end of tRNA(Ala). Also edits incorrectly charged Ser-tRNA(Ala) and Gly-tRNA(Ala) via its editing domain. In Synechococcus elongatus (strain ATCC 33912 / PCC 7942 / FACHB-805) (Anacystis nidulans R2), this protein is Alanine--tRNA ligase.